Here is a 453-residue protein sequence, read N- to C-terminus: MASSLPWLCIILWLENALGKLEVEGNFYSENVSRILDNLLEGYDNRLRPGFGGAVTEVKTDIYVTSFGPVSDVEMEYTMDVFFRQTWTDERLKFGGPTEILSLNNLMVSKIWTPDTFFRNGKKSIAHNMTTPNKLFRIMQNGTILYTMRLTINADCPMRLVNFPMDGHACPLKFGSYAYPKSEIIYTWKKGPLYSVEVPEESSSLLQYDLIGQTVSSETIKSNTGEYVIMTVYFHLQRKMGYFMIQIYTPCIMTVILSQVSFWINKESVPARTVFGITTVLTMTTLSISARHSLPKVSYATAMDWFIAVCFAFVFSALIEFAAVNYFTNLQTQKAKRKAQFAAPPTVTISKATEPLEAEIVLHPDSKYHLKKRITSLSLPIVSSSEANKVLTRAPILQSTPVTPPPLSPAFGGTSKIDQYSRILFPVAFAGFNLVYWVVYLSKDTMEVSSSVE.

The N-terminal stretch at 1 to 19 (MASSLPWLCIILWLENALG) is a signal peptide. The Extracellular segment spans residues 20-243 (KLEVEGNFYS…FHLQRKMGYF (224 aa)). The N-linked (GlcNAc...) asparagine glycan is linked to Asn31. Arg84 contributes to the 4-aminobutanoate binding site. 2 N-linked (GlcNAc...) asparagine glycosylation sites follow: Asn128 and Asn141. Residue Thr147 participates in 4-aminobutanoate binding. Cys156 and Cys170 are oxidised to a cystine. A helical membrane pass occupies residues 244 to 264 (MIQIYTPCIMTVILSQVSFWI). Residues 265–270 (NKESVP) lie on the Cytoplasmic side of the membrane. Residues 271 to 290 (ARTVFGITTVLTMTTLSISA) form a helical membrane-spanning segment. Residues 291-304 (RHSLPKVSYATAMD) lie on the Extracellular side of the membrane. A helical transmembrane segment spans residues 305–325 (WFIAVCFAFVFSALIEFAAVN). At 326–422 (YFTNLQTQKA…GTSKIDQYSR (97 aa)) the chain is on the cytoplasmic side. Phosphothreonine is present on Thr403. A helical transmembrane segment spans residues 423–443 (ILFPVAFAGFNLVYWVVYLSK). Topologically, residues 444-453 (DTMEVSSSVE) are extracellular.

This sequence belongs to the ligand-gated ion channel (TC 1.A.9) family. Gamma-aminobutyric acid receptor (TC 1.A.9.5) subfamily. GABRA6 sub-subfamily. Heteropentamer, formed by a combination of alpha (GABRA1-6), beta (GABRB1-3), gamma (GABRG1-3), delta (GABRD), epsilon (GABRE), rho (GABRR1-3), pi (GABRP) and theta (GABRQ) chains, each subunit exhibiting distinct physiological and pharmacological properties. Binds UBQLN1. Expressed in brain, in cerebellar granule cells.

It localises to the postsynaptic cell membrane. Its subcellular location is the cell membrane. The catalysed reaction is chloride(in) = chloride(out). Alpha subunit of the heteropentameric ligand-gated chloride channel gated by gamma-aminobutyric acid (GABA), a major inhibitory neurotransmitter in the brain. GABA-gated chloride channels, also named GABA(A) receptors (GABAAR), consist of five subunits arranged around a central pore and contain GABA active binding site(s) located at the alpha and beta subunit interface(s). When activated by GABA, GABAARs selectively allow the flow of chloride anions across the cell membrane down their electrochemical gradient. Alpha-6/GABRA6 subunits are found at both synaptic and extrasynaptic sites. Chloride influx into the postsynaptic neuron following GABAAR opening decreases the neuron ability to generate a new action potential, thereby reducing nerve transmission. Extrasynaptic alpha-6-containing receptors contribute to the tonic GABAergic inhibition. Alpha-6 subunits are also present on glutamatergic synapses. The chain is Gamma-aminobutyric acid receptor subunit alpha-6 from Homo sapiens (Human).